Consider the following 287-residue polypeptide: Iron-sulfur cluster carrier protein (287 aa).

47–54 (GKGGVGKS) serves as a coordination point for ATP.

It belongs to the Mrp/NBP35 ATP-binding proteins family. In terms of assembly, homodimer.

Its function is as follows. Binds and transfers iron-sulfur (Fe-S) clusters to target apoproteins. Can hydrolyze ATP. The protein is Iron-sulfur cluster carrier protein of Pseudomonas fragi.